A 276-amino-acid chain; its full sequence is Large ribosomal subunit protein uL2 (276 aa).

A disordered region spans residues 224-276 (VMNPVDHPHGGGEGKAPIGRKSPMTPWGKPTLGYKTRKKKNKSDKFIIRRRKK). The span at 258–276 (KTRKKKNKSDKFIIRRRKK) shows a compositional bias: basic residues.

It belongs to the universal ribosomal protein uL2 family. In terms of assembly, part of the 50S ribosomal subunit. Forms a bridge to the 30S subunit in the 70S ribosome.

One of the primary rRNA binding proteins. Required for association of the 30S and 50S subunits to form the 70S ribosome, for tRNA binding and peptide bond formation. It has been suggested to have peptidyltransferase activity; this is somewhat controversial. Makes several contacts with the 16S rRNA in the 70S ribosome. The polypeptide is Large ribosomal subunit protein uL2 (Geobacillus stearothermophilus (Bacillus stearothermophilus)).